The sequence spans 417 residues: Gamma-glutamyl phosphate reductase (417 aa).

This sequence belongs to the gamma-glutamyl phosphate reductase family.

It is found in the cytoplasm. It carries out the reaction L-glutamate 5-semialdehyde + phosphate + NADP(+) = L-glutamyl 5-phosphate + NADPH + H(+). It functions in the pathway amino-acid biosynthesis; L-proline biosynthesis; L-glutamate 5-semialdehyde from L-glutamate: step 2/2. Catalyzes the NADPH-dependent reduction of L-glutamate 5-phosphate into L-glutamate 5-semialdehyde and phosphate. The product spontaneously undergoes cyclization to form 1-pyrroline-5-carboxylate. The sequence is that of Gamma-glutamyl phosphate reductase from Clostridium novyi (strain NT).